The chain runs to 118 residues: Telomere bouquet protein 2 (118 aa).

In terms of assembly, interacts with bqt1. The bqt1-bqt2-sad1 complex binds rap1.

It is found in the cytoplasm. It localises to the nucleus. Its subcellular location is the cytoskeleton. The protein localises to the microtubule organizing center. The protein resides in the spindle pole body. It is found in the chromosome. It localises to the telomere. In terms of biological role, involved in chromosome segregation. During meiotic prophase, connects telomeres to the spindle pole body by forming a bridge between the telomere protein rap1 and the spindle pole body protein sad1. The protein is Telomere bouquet protein 2 (bqt2) of Schizosaccharomyces pombe (strain 972 / ATCC 24843) (Fission yeast).